The sequence spans 105 residues: Small ribosomal subunit protein uS10 (105 aa).

This sequence belongs to the universal ribosomal protein uS10 family. In terms of assembly, part of the 30S ribosomal subunit.

Involved in the binding of tRNA to the ribosomes. The sequence is that of Small ribosomal subunit protein uS10 from Crocosphaera subtropica (strain ATCC 51142 / BH68) (Cyanothece sp. (strain ATCC 51142)).